Reading from the N-terminus, the 822-residue chain is Putative pentatricopeptide repeat-containing protein At5g13230, mitochondrial (822 aa).

The transit peptide at 1 to 70 (MIVFMRIIHV…QKNDPISAKA (70 aa)) directs the protein to the mitochondrion. PPR repeat units lie at residues 48–82 (DSHAYGAMLRRCIQKNDPISAKAIHCDILKKGSCL), 83–117 (DLFATNILLNAYVKAGFDKDALNLFDEMPERNNVS), 145–179 (NPHVFTSFLKLFVSLDKAEICPWLHSPIVKLGYDS), 180–210 (NAFVGAALINAYSVCGSVDSARTVFEGILCK), 211–245 (DIVVWAGIVSCYVENGYFEDSLKLLSCMRMAGFMP), 246–280 (NNYTFDTALKASIGLGAFDFAKGVHGQILKTCYVL), 281–311 (DPRVGVGLLQLYTQLGDMSDAFKVFNEMPKN), 312–346 (DVVPWSFMIARFCQNGFCNEAVDLFIRMREAFVVP), 347–381 (NEFTLSSILNGCAIGKCSGLGEQLHGLVVKVGFDL), 382–416 (DIYVSNALIDVYAKCEKMDTAVKLFAELSSKNEVS), 417–447 (WNTVIVGYENLGEGGKAFSMFREALRNQVSV), 448–482 (TEVTFSSALGACASLASMDLGVQVHGLAIKTNNAK), 483–513 (KVAVSNSLIDMYAKCGDIKFAQSVFNEMETI), 514–548 (DVASWNALISGYSTHGLGRQALRILDIMKDRDCKP), 549–584 (NGLTFLGVLSGCSNAGLIDQGQECFESMIRDHGIEP), and 585–619 (CLEHYTCMVRLLGRSGQLDKAMKLIEGIPYEPSVM). The tract at residues 620–695 (IWRAMLSASM…EPGLSWIEHQ (76 aa)) is type E motif. Positions 696-726 (GDVHYFSVGLSDHPDMKLINGMLEWLNMKAT) are type E(+) motif. The tract at residues 727 to 822 (RAGYVPDRNA…AGVCSCGDHW (96 aa)) is type DYW motif.

It belongs to the PPR family. PCMP-H subfamily.

Its subcellular location is the mitochondrion. This is Putative pentatricopeptide repeat-containing protein At5g13230, mitochondrial (PCMP-H89) from Arabidopsis thaliana (Mouse-ear cress).